A 625-amino-acid polypeptide reads, in one-letter code: Glutamyl-tRNA(Gln) amidotransferase subunit E (625 aa).

Belongs to the GatB/GatE family. GatE subfamily. Heterodimer of GatD and GatE.

It carries out the reaction L-glutamyl-tRNA(Gln) + L-glutamine + ATP + H2O = L-glutaminyl-tRNA(Gln) + L-glutamate + ADP + phosphate + H(+). Functionally, allows the formation of correctly charged Gln-tRNA(Gln) through the transamidation of misacylated Glu-tRNA(Gln) in organisms which lack glutaminyl-tRNA synthetase. The reaction takes place in the presence of glutamine and ATP through an activated gamma-phospho-Glu-tRNA(Gln). The GatDE system is specific for glutamate and does not act on aspartate. The sequence is that of Glutamyl-tRNA(Gln) amidotransferase subunit E from Caldivirga maquilingensis (strain ATCC 700844 / DSM 13496 / JCM 10307 / IC-167).